A 151-amino-acid polypeptide reads, in one-letter code: Arginine repressor (151 aa).

Belongs to the ArgR family.

Its subcellular location is the cytoplasm. The protein operates within amino-acid biosynthesis; L-arginine biosynthesis [regulation]. Regulates arginine biosynthesis genes. The protein is Arginine repressor of Heliobacterium modesticaldum (strain ATCC 51547 / Ice1).